A 355-amino-acid chain; its full sequence is UDP-N-acetylglucosamine--N-acetylmuramyl-(pentapeptide) pyrophosphoryl-undecaprenol N-acetylglucosamine transferase (355 aa).

UDP-N-acetyl-alpha-D-glucosamine is bound by residues 13-15, Asn125, Arg162, Ser190, Ile244, and Gln289; that span reads TGG.

This sequence belongs to the glycosyltransferase 28 family. MurG subfamily.

The protein localises to the cell inner membrane. The catalysed reaction is di-trans,octa-cis-undecaprenyl diphospho-N-acetyl-alpha-D-muramoyl-L-alanyl-D-glutamyl-meso-2,6-diaminopimeloyl-D-alanyl-D-alanine + UDP-N-acetyl-alpha-D-glucosamine = di-trans,octa-cis-undecaprenyl diphospho-[N-acetyl-alpha-D-glucosaminyl-(1-&gt;4)]-N-acetyl-alpha-D-muramoyl-L-alanyl-D-glutamyl-meso-2,6-diaminopimeloyl-D-alanyl-D-alanine + UDP + H(+). Its pathway is cell wall biogenesis; peptidoglycan biosynthesis. Its function is as follows. Cell wall formation. Catalyzes the transfer of a GlcNAc subunit on undecaprenyl-pyrophosphoryl-MurNAc-pentapeptide (lipid intermediate I) to form undecaprenyl-pyrophosphoryl-MurNAc-(pentapeptide)GlcNAc (lipid intermediate II). This Neisseria gonorrhoeae (strain ATCC 700825 / FA 1090) protein is UDP-N-acetylglucosamine--N-acetylmuramyl-(pentapeptide) pyrophosphoryl-undecaprenol N-acetylglucosamine transferase.